Reading from the N-terminus, the 512-residue chain is Cobyric acid synthase (512 aa).

Residues 251-451 enclose the GATase cobBQ-type domain; the sequence is ALDITVIRLP…IHGLFDSANF (201 aa). Cysteine 332 functions as the Nucleophile in the catalytic mechanism. The active site involves histidine 443.

The protein belongs to the CobB/CobQ family. CobQ subfamily.

The protein operates within cofactor biosynthesis; adenosylcobalamin biosynthesis. Its function is as follows. Catalyzes amidations at positions B, D, E, and G on adenosylcobyrinic A,C-diamide. NH(2) groups are provided by glutamine, and one molecule of ATP is hydrogenolyzed for each amidation. The protein is Cobyric acid synthase of Photorhabdus laumondii subsp. laumondii (strain DSM 15139 / CIP 105565 / TT01) (Photorhabdus luminescens subsp. laumondii).